Here is a 109-residue protein sequence, read N- to C-terminus: Small ribosomal subunit protein eS25z (109 aa).

A disordered region spans residues 1–36 (MAPKKDKVPPPSSKPAKSGGGKQKKKKWSKGKQKEK). Over residues 22–31 (KQKKKKWSKG) the composition is skewed to basic residues.

It belongs to the eukaryotic ribosomal protein eS25 family.

This is Small ribosomal subunit protein eS25z (RPS25A) from Arabidopsis thaliana (Mouse-ear cress).